The following is a 283-amino-acid chain: Non-selective voltage-gated ion channel VDAC1 (283 aa).

N-acetylalanine is present on alanine 2. ATP is bound at residue lysine 12. Lysine 12 participates in a covalent cross-link: Glycyl lysine isopeptide (Lys-Gly) (interchain with G-Cter in ubiquitin). At serine 13 the chain carries Phosphoserine. Threonine 19 is subject to Phosphothreonine. Position 20 (lysine 20) interacts with ATP. At lysine 20 the chain carries N6-acetyllysine; alternate. An N6-succinyllysine; alternate modification is found at lysine 20. Residue lysine 20 forms a Glycyl lysine isopeptide (Lys-Gly) (interchain with G-Cter in ubiquitin); alternate linkage. Transmembrane regions (beta stranded) follow at residues 26–35 (LIKLDLKTKS) and 39–47 (LEFTSSGSA). Glycyl lysine isopeptide (Lys-Gly) (interchain with G-Cter in ubiquitin) cross-links involve residues lysine 53 and lysine 61. A beta stranded membrane pass occupies residues 54–64 (VTGSLETKYRW). Residue tyrosine 67 is modified to Phosphotyrosine. The next 3 membrane-spanning stretches (beta stranded) occupy residues 69–76 (LTFTEKWN), 80–89 (TLGTEITVED), and 95–104 (LKLTFDSSFS). Phosphothreonine is present on threonine 107. At lysine 109 the chain carries N6-acetyllysine; alternate. Lysine 109 is covalently cross-linked (Glycyl lysine isopeptide (Lys-Gly) (interchain with G-Cter in ubiquitin); alternate). Residue lysine 110 forms a Glycyl lysine isopeptide (Lys-Gly) (interchain with G-Cter in ubiquitin) linkage. Transmembrane regions (beta stranded) follow at residues 111–120 (NAKIKTGYKR), 123–130 (INLGCDMD), 137–145 (SIRGALVLG), and 150–158 (LAGYQMNFE). Lysine 161 participates in a covalent cross-link: Glycyl lysine isopeptide (Lys-Gly) (interchain with G-Cter in ubiquitin). 6 beta stranded membrane passes run 163–175 (RVTQ…GYKT), 178–185 (FQLHTNVN), 189–198 (EFGGSIYQKV), 202–211 (LETAVNLAWT), 218–227 (RFGIAAKYQI), and 231–238 (ACFSAKVN). Serine 193 carries the phosphoserine; by NEK1 modification. Position 240 is a phosphoserine (serine 240). 242–244 (LIG) contributes to the NAD(+) binding site. The beta stranded transmembrane segment at 242 to 251 (LIGLGYTQTL) threads the bilayer. Lysine 252 bears the N6-acetyllysine mark. The beta stranded transmembrane segment at 254–263 (GIKLTLSALL) threads the bilayer. 260–264 (SALLD) is an NAD(+) binding site. Residue lysine 266 is modified to N6-acetyllysine; alternate. Lysine 266 participates in a covalent cross-link: Glycyl lysine isopeptide (Lys-Gly) (interchain with G-Cter in ubiquitin); alternate. The beta stranded transmembrane segment at 273 to 282 (HKLGLGLEFQ) threads the bilayer. A Glycyl lysine isopeptide (Lys-Gly) (interchain with G-Cter in ubiquitin) cross-link involves residue lysine 274.

The protein belongs to the eukaryotic mitochondrial porin family. As to quaternary structure, homodimer and homotrimer; in response to cyclic AMP or calcium; oligomerization is required for scramblase activity. Component of the mitochondrial permeability transition pore complex (mPTPC), at least composed of SPG7, VDAC1 and PPIF. Interacts with SPG7, NIPSNAP2 and SLC25A30. Interacts with hexokinases including HK1. The HK1-VDAC1 complex interacts with ATF2. Interacts with BCL2L1. Interacts with BAK1. Interacts with RTL10/BOP (via BH3 domain). Interacts with amyloid-beta and APP; induces VDAC1 dephosphorylation. Interacts with TMEM41B. Interacts with BCAP31. Interacts with HSPA9; this interaction couples ITPR1 to VDAC1. (Microbial infection) Interacts with influenza A virus PB1-F2 protein. In terms of processing, phosphorylation at Ser-193 by NEK1 promotes the closed conformational state preventing excessive mitochondrial membrane permeability and subsequent apoptotic cell death after injury. Phosphorylation by the AKT-GSK3B axis stabilizes the protein probably by preventing ubiquitin-mediated proteasomal degradation. Ubiquitinated. Undergoes monoubiquitination and polyubiquitination by PRKN; monoubiquitination at Lys-274 inhibits apoptosis, whereas polyubiquitination leads to its degradation and promotes mitophagy. Deubiquitinated by USP30. In terms of tissue distribution, expressed in erythrocytes (at protein level). Expressed in heart, liver and skeletal muscle.

The protein localises to the mitochondrion outer membrane. The protein resides in the cell membrane. It localises to the membrane raft. It catalyses the reaction chloride(in) = chloride(out). The enzyme catalyses K(+)(in) = K(+)(out). It carries out the reaction ATP(in) = ATP(out). The catalysed reaction is Ca(2+)(in) = Ca(2+)(out). It catalyses the reaction Na(+)(in) = Na(+)(out). The enzyme catalyses Mg(2+)(in) = Mg(2+)(out). It carries out the reaction L-glutamate(out) = L-glutamate(in). The catalysed reaction is dopamine(out) = dopamine(in). It catalyses the reaction acetylcholine(in) = acetylcholine(out). The enzyme catalyses Fe(III)-[cytochrome c](out) = Fe(III)-[cytochrome c](in). It carries out the reaction a 1,2-diacyl-sn-glycero-3-phosphocholine(in) = a 1,2-diacyl-sn-glycero-3-phosphocholine(out). The catalysed reaction is a 1,2-diacyl-sn-glycero-3-phospho-L-serine(in) = a 1,2-diacyl-sn-glycero-3-phospho-L-serine(out). With respect to regulation, inhibited by nitric oxide. Functionally, non-selective voltage-gated ion channel that mediates the transport of anions and cations through the mitochondrion outer membrane and plasma membrane. The channel at the outer mitochondrial membrane allows diffusion of small hydrophilic molecules; in the plasma membrane it is involved in cell volume regulation and apoptosis. It adopts an open conformation at low or zero membrane potential and a closed conformation at potentials above 30-40 mV. The open state has a weak anion selectivity whereas the closed state is cation-selective. Binds various signaling molecules, including the sphingolipid ceramide, the phospholipid phosphatidylcholine, and the sterols cholesterol and oxysterol. In depolarized mitochondria, acts downstream of PRKN and PINK1 to promote mitophagy or prevent apoptosis; polyubiquitination by PRKN promotes mitophagy, while monoubiquitination by PRKN decreases mitochondrial calcium influx which ultimately inhibits apoptosis. May participate in the formation of the permeability transition pore complex (PTPC) responsible for the release of mitochondrial products that triggers apoptosis. May mediate ATP export from cells. Part of a complex composed of HSPA9, ITPR1 and VDAC1 that regulates mitochondrial calcium-dependent apoptosis by facilitating calcium transport from the ER lumen to the mitochondria intermembrane space thus providing calcium for the downstream calcium channel MCU that directly releases it into mitochondria matrix. Mediates cytochrome c efflux. Catalyzes the scrambling of phospholipids across the outer mitochondrial membrane; the mechanism is unrelated to channel activity and is capable of translocating both anionic and zwitterionic phospholipids. This chain is Non-selective voltage-gated ion channel VDAC1, found in Homo sapiens (Human).